Consider the following 192-residue polypeptide: MNKRDYMNTSVQEPPLDYSFRSIHVIQDLVNEEPRTGLRPLKRSKSGKSLTQSLWLNNNVLNDLRDFNQVASQLLEHPENLAWIDLSFNDLTSIDPVLTTFFNLSVLYLHGNSIQRLGEVNKLAVLPRLRSLTLHGNPMEEEKGYRQYVLCTLSRITTFDFAGVTKADRTTAEVWKRMNIKPKKAWIKRNTL.

3 LRR repeats span residues 49 to 71 (SLTQSLWLNNNVLNDLRDFNQVA), 80 to 101 (NLAWIDLSFNDLTSIDPVLTTF), and 103 to 124 (NLSVLYLHGNSIQRLGEVNKLA). The LRRCT domain occupies 137-175 (NPMEEEKGYRQYVLCTLSRITTFDFAGVTKADRTTAEVW).

Its subcellular location is the cytoplasm. The sequence is that of Leucine-rich repeat-containing protein 51 from Pan troglodytes (Chimpanzee).